We begin with the raw amino-acid sequence, 362 residues long: Chorismate synthase (362 aa).

Residues R48 and R54 each contribute to the NADP(+) site. Residues 125–127, 238–239, G278, 293–297, and R319 contribute to the FMN site; these read RSS, NA, and KPTSS.

It belongs to the chorismate synthase family. In terms of assembly, homotetramer. It depends on FMNH2 as a cofactor.

The enzyme catalyses 5-O-(1-carboxyvinyl)-3-phosphoshikimate = chorismate + phosphate. It functions in the pathway metabolic intermediate biosynthesis; chorismate biosynthesis; chorismate from D-erythrose 4-phosphate and phosphoenolpyruvate: step 7/7. Catalyzes the anti-1,4-elimination of the C-3 phosphate and the C-6 proR hydrogen from 5-enolpyruvylshikimate-3-phosphate (EPSP) to yield chorismate, which is the branch point compound that serves as the starting substrate for the three terminal pathways of aromatic amino acid biosynthesis. This reaction introduces a second double bond into the aromatic ring system. This Tolumonas auensis (strain DSM 9187 / NBRC 110442 / TA 4) protein is Chorismate synthase.